Consider the following 274-residue polypeptide: Type II restriction enzyme XamI (274 aa).

The enzyme catalyses Endonucleolytic cleavage of DNA to give specific double-stranded fragments with terminal 5'-phosphates.. A P subtype restriction enzyme that recognizes the double-stranded sequence 5'-GTCGAC-3' and cleaves after G-1. The sequence is that of Type II restriction enzyme XamI (xamIR) from Xanthomonas campestris pv. amaranthicola.